A 45-amino-acid chain; its full sequence is Sperm-specific protein Phi-3 (45 aa).

The segment at 1–45 (AKAKRSPRKKKAAVKKSSKSKAKKPKSPKKKKAAKKPAKKAAKKK) is disordered.

The protein resides in the nucleus. Its subcellular location is the chromosome. Functionally, involved in nuclear basic protein transition: histones are replaced by spermatid specific proteins which are themselves replaced by protamines in late spermatids. This Mytilus californianus (California mussel) protein is Sperm-specific protein Phi-3.